Consider the following 259-residue polypeptide: MLHLFLFSSAASTTTAVEDNSTTMPPSSRSAANQNSSSSLHLCKHSPSATLDLLILILVLFSGTFLLSSYFSYLIHSLSLLSSHFPSITISLSSLLPPLIIFFSSDHSTEDEDHHHPSGKIPPPASFFFAFAVFFAASIAFLDLCCGSRSRKCRNPKCKGMKKAMEFDLQLQTEECVKSGSVKEIDRLPWKGGSESNPDYECLRAELRKMAPVNGRAVLIFRSKCGCPIAKLEGWGPKRSRRHKKSPAKLAVKGCIDNR.

The next 3 helical transmembrane spans lie at 55–75, 85–105, and 127–147; these read ILIL…SYLI, FPSI…FFSS, and FFFA…LCCG.

The protein resides in the membrane. This is an uncharacterized protein from Arabidopsis thaliana (Mouse-ear cress).